The chain runs to 197 residues: Pyridoxal 5'-phosphate synthase subunit PdxT (197 aa).

50–52 is an L-glutamine binding site; sequence GES. Cysteine 82 acts as the Nucleophile in catalysis. L-glutamine is bound by residues arginine 111 and 140–141; that span reads IR. Catalysis depends on charge relay system residues histidine 176 and glutamate 178.

The protein belongs to the glutaminase PdxT/SNO family. In terms of assembly, in the presence of PdxS, forms a dodecamer of heterodimers. Only shows activity in the heterodimer.

It catalyses the reaction aldehydo-D-ribose 5-phosphate + D-glyceraldehyde 3-phosphate + L-glutamine = pyridoxal 5'-phosphate + L-glutamate + phosphate + 3 H2O + H(+). It carries out the reaction L-glutamine + H2O = L-glutamate + NH4(+). It functions in the pathway cofactor biosynthesis; pyridoxal 5'-phosphate biosynthesis. Catalyzes the hydrolysis of glutamine to glutamate and ammonia as part of the biosynthesis of pyridoxal 5'-phosphate. The resulting ammonia molecule is channeled to the active site of PdxS. This is Pyridoxal 5'-phosphate synthase subunit PdxT from Streptomyces griseus subsp. griseus (strain JCM 4626 / CBS 651.72 / NBRC 13350 / KCC S-0626 / ISP 5235).